The following is a 605-amino-acid chain: Class II receptor tyrosine kinase (605 aa).

An Ig-like C2-type domain is found at M1–D67. Residues M1–V84 are Extracellular-facing. N-linked (GlcNAc...) asparagine glycans are attached at residues N26, N44, and N72. The helical transmembrane segment at L85 to V105 threads the bilayer. Over W106–V605 the chain is Cytoplasmic. The interval E209–Q230 is disordered. Residues R221–Q230 show a composition bias toward polar residues. A Protein kinase domain is found at I346–V605. ATP-binding positions include I352–V360 and K393. Catalysis depends on D496, which acts as the Proton acceptor. Y527 is modified (phosphotyrosine; by autocatalysis).

The protein belongs to the protein kinase superfamily. Tyr protein kinase family. Insulin receptor subfamily. Phosphorylated.

It is found in the cell membrane. The catalysed reaction is L-tyrosyl-[protein] + ATP = O-phospho-L-tyrosyl-[protein] + ADP + H(+). This Geodia cydonium (Sponge) protein is Class II receptor tyrosine kinase (TK).